A 322-amino-acid chain; its full sequence is Chromoplast-specific carotenoid-associated protein, chromoplastic (322 aa).

A chromoplast-targeting transit peptide spans 1–58 (MAFVSQFNQLPCKTLALNPPQPQLTSKPSVFPIASIGATARAAAGKSLISVRPAFKVR). Residues 67–88 (GEDKDEKYGDDSSVAVAEKEEE) form a disordered region.

This sequence belongs to the PAP/fibrillin family. In terms of tissue distribution, expressed in corollas. Not detected in fruits, stems, leaves, and roots.

Its subcellular location is the plastid. It localises to the chromoplast. Functionally, may be involved in carotenoid sequestration within chromoplasts. This Cucumis sativus (Cucumber) protein is Chromoplast-specific carotenoid-associated protein, chromoplastic (CHRC).